We begin with the raw amino-acid sequence, 783 residues long: Protein phosphatase 2C 29 (783 aa).

Positions 151-194 (SFSALPLQPGPDRSGLFMSGPIERGATSGPLDPPAGEISRSNSA) are disordered. Residue Ser199 is modified to Phosphoserine. In terms of domain architecture, PPM-type phosphatase spans 260–770 (SSGENDLQWA…DDCTVLVIAL (511 aa)). Mn(2+) is bound by residues Asp295 and Gly296. The interval 555 to 595 (ETGESVETAERVEERRNDLDRDDGNKEPLVVDSSDSTVNNE) is disordered. Positions 562–580 (TAERVEERRNDLDRDDGNK) are enriched in basic and acidic residues. Positions 701 and 761 each coordinate Mn(2+).

The protein belongs to the PP2C family. The cofactor is Mg(2+). Requires Mn(2+) as cofactor. As to expression, expressed in roots, leaves, stems, inflorescences, flowers and developing vascular tissue.

It is found in the nucleus. It catalyses the reaction O-phospho-L-seryl-[protein] + H2O = L-seryl-[protein] + phosphate. The catalysed reaction is O-phospho-L-threonyl-[protein] + H2O = L-threonyl-[protein] + phosphate. Involved in the regulation of pedicel length and of CLAVATA pathways controlling stem cell identity at shoot and flower meristems. The protein is Protein phosphatase 2C 29 (PLL1) of Arabidopsis thaliana (Mouse-ear cress).